A 322-amino-acid chain; its full sequence is 1-aminocyclopropane-1-carboxylate oxidase 1 (322 aa).

Residues 159–259 (PTFGTKVSSY…RMSIASFYNP (101 aa)) form the Fe2OG dioxygenase domain. 3 residues coordinate Fe cation: H183, D185, and H240.

Belongs to the iron/ascorbate-dependent oxidoreductase family. Requires Fe cation as cofactor.

The catalysed reaction is 1-aminocyclopropane-1-carboxylate + L-ascorbate + O2 = ethene + L-dehydroascorbate + hydrogen cyanide + CO2 + 2 H2O. Its pathway is alkene biosynthesis; ethylene biosynthesis via S-adenosyl-L-methionine; ethylene from S-adenosyl-L-methionine: step 2/2. The sequence is that of 1-aminocyclopropane-1-carboxylate oxidase 1 (ACO1) from Oryza sativa subsp. japonica (Rice).